Reading from the N-terminus, the 353-residue chain is O-antigen chain mannosyltransferase RfbU (353 aa).

The protein belongs to the glycosyltransferase group 1 family. Glycosyltransferase 4 subfamily.

The catalysed reaction is alpha-L-rhamnosyl-(1-&gt;3)-alpha-D-galactosyl-1-diphospho-di-trans,octa-cis-undecaprenol + GDP-alpha-D-mannose = alpha-D-Man-(1-&gt;4)-alpha-L-Rha-(1-&gt;3)-alpha-D-Gal-di-trans,octa-cis-undecaprenyl diphosphate + GDP + H(+). It functions in the pathway bacterial outer membrane biogenesis; LPS O-antigen biosynthesis. Its function is as follows. Mannosyltransferase involved in the biosynthesis of the repeat unit of the lipopolysaccharide (LPS) O-antigen region. Catalyzes the addition of a mannose to the rhamnosyl-galactosyl-undecaprenyl diphosphate intermediate. This chain is O-antigen chain mannosyltransferase RfbU, found in Salmonella typhimurium (strain LT2 / SGSC1412 / ATCC 700720).